The following is a 476-amino-acid chain: Hyaluronidase-2 (476 aa).

A signal peptide spans 1-20 (MWTGLGPAVTLALVLVVAWA). 2 disulfide bridges follow: C47/C343 and C214/C230. 2 N-linked (GlcNAc...) asparagine glycosylation sites follow: N77 and N106. Catalysis depends on E138, which acts as the Proton donor. N-linked (GlcNAc...) asparagine glycans are attached at residues N340 and N360. The EGF-like domain occupies 364 to 442 (AAQYCSWAQC…YLGWGGEQCQ (79 aa)). 3 disulfides stabilise this stretch: C368–C379, C373–C430, and C432–C441. The GPI-anchor amidated glycine moiety is linked to residue G451. Positions 452-476 (ASGAWAGSHLTGLLAVAVLAFTWTS) are cleaved as a propeptide — removed in mature form.

The protein belongs to the glycosyl hydrolase 56 family. As to quaternary structure, interacts with MST1R. In terms of assembly, (Microbial infection) Interacts with Jaagsiekte sheep retrovirus (JSRV) envelope proteins.

The protein localises to the cell membrane. The enzyme catalyses Random hydrolysis of (1-&gt;4)-linkages between N-acetyl-beta-D-glucosamine and D-glucuronate residues in hyaluronate.. Its function is as follows. Catalyzes hyaluronan degradation into small fragments that are endocytosed and degraded in lysosomes by HYAL1 and exoglycosidases. Essential for the breakdown of extracellular matrix hyaluronan. This is Hyaluronidase-2 (HYAL2) from Ovis aries (Sheep).